The sequence spans 138 residues: Cell division protein SepF (138 aa).

The interval 1-59 (MNNKFKDFFGFGDNDSYEERDAYEEHYDEQEEMQNSNRPTNSRDSNVVSIKAGQAGSGP) is disordered. Positions 33-48 (MQNSNRPTNSRDSNVV) are enriched in polar residues.

The protein belongs to the SepF family. In terms of assembly, homodimer. Interacts with FtsZ.

Its subcellular location is the cytoplasm. In terms of biological role, cell division protein that is part of the divisome complex and is recruited early to the Z-ring. Probably stimulates Z-ring formation, perhaps through the cross-linking of FtsZ protofilaments. Its function overlaps with FtsA. The protein is Cell division protein SepF of Lactobacillus delbrueckii subsp. bulgaricus (strain ATCC 11842 / DSM 20081 / BCRC 10696 / JCM 1002 / NBRC 13953 / NCIMB 11778 / NCTC 12712 / WDCM 00102 / Lb 14).